The primary structure comprises 901 residues: MDIVPVVALCCCLVLLPSWAYGLGSMASIAVSYGEDGPVFCGLNSDGSHLVTCFGADASVVYGAPSRIPFVGVTAGDGFACGLLLDTNQPYCWGSNSYVKIGVPQPMVEGAMYSELSAGDNHLCALRTSVKGFHSVNGDTSVIDCWGYNMTATHTVTGAVSAISAGSVFNCGLFARNRTVFCWGDESVSGVIGLAPRNVRFQSIGAGGYHVCGVLENAQVFCWGRSLEMQQMSTPSSTDDGDVNIVPMDAMVSVVGGRFHACGIRSLDHQVACWGFTLQNSTLAPKGLRVYAIVAGDYFTCGVPAETSLKPMCWGHSGPLALPMAVSPGICVSDSCSHGYYEYANHGEVGSGSKTCKPANSRLCLPCSVGCPDDSYESSPCNATADRVCQFDCSKCASDECVSFCLSQKRTKNRKFMAFQLRIFVAEIAFAVILVFSVTAIACLYVRYKLRHCQCSKNELRLAKNTTYSFRKDNMKIQPDVEDLKIRRAQEFSYEELEQATGGFSEDSQVGKGSFSCVFKGILRDGTVVAVKRAIKASDVKKSSKEFHTELDLLSRLNHAHLLNLLGYCEDGSERLLVYEFMAHGSLYQHLHGKDPNLKKRLNWARRVTIAVQAARGIEYLHGYACPPVIHRDIKSSNILIDEDHNARVADFGLSILGPADSGTPLSELPAGTLGYLDPEYYRLHYLTTKSDVYSFGVVLLEILSGRKAIDMQFEEGNIVEWAVPLIKAGDISALLDPVLSPPSDLEALKKIAAVACKCVRMRAKDRPSMDKVTTALERALALLMGSPCIEQPILPTEVVLGSSRMHKKVSQRSSNHSCSENDLVDGDDQRIEYRAPSWITFPSVTSSQRRKSSASEADMDGRTTTDGRNVGSSIGDGLRSLEEEISPASPQENLYLQHNF.

The signal sequence occupies residues 1–22; that stretch reads MDIVPVVALCCCLVLLPSWAYG. 7 repeat units span residues 31–66, 70–105, 123–158, 160–193, 201–234, 251–285, and 290–328. Residues 31–328 form a 7 X 36 AA repeats region; that stretch reads VSYGEDGPVF…PLALPMAVSP (298 aa). N-linked (GlcNAc...) asparagine glycosylation is found at asparagine 149 and asparagine 177. N-linked (GlcNAc...) asparagine glycosylation occurs at asparagine 280. A TNFR-Cys repeat occupies 335–389; the sequence is SCSHGYYEYANHGEVGSGSKTCKPANSRLCLPCSVGCPDDSYESSPCNATADRVC. 3 cysteine pairs are disulfide-bonded: cysteine 336–cysteine 364, cysteine 367–cysteine 381, and cysteine 371–cysteine 389. N-linked (GlcNAc...) asparagine glycosylation occurs at asparagine 382. Residues 423–443 form a helical membrane-spanning segment; the sequence is IFVAEIAFAVILVFSVTAIAC. Residues 504 to 781 enclose the Protein kinase domain; the sequence is FSEDSQVGKG…KVTTALERAL (278 aa). Residues 510–518 and lysine 532 contribute to the ATP site; that span reads VGKGSFSCV. Aspartate 633 serves as the catalytic Proton acceptor. Positions 845-901 are disordered; sequence VTSSQRRKSSASEADMDGRTTTDGRNVGSSIGDGLRSLEEEISPASPQENLYLQHNF. Over residues 889–901 the composition is skewed to polar residues; that stretch reads ASPQENLYLQHNF.

This sequence belongs to the protein kinase superfamily. Ser/Thr protein kinase family. In terms of assembly, homodimer. Autophosphorylated. As to expression, specifically expressed in the epidermal cells of paleas and lemmas.

It localises to the cell membrane. The protein localises to the endosome. Its subcellular location is the multivesicular body membrane. It catalyses the reaction L-seryl-[protein] + ATP = O-phospho-L-seryl-[protein] + ADP + H(+). The catalysed reaction is L-threonyl-[protein] + ATP = O-phospho-L-threonyl-[protein] + ADP + H(+). Functionally, receptor protein kinase. Could play a role in a differentiation signal. Controls formative cell division in meristems. Regulates epidermal cell differentiation in many organs. During floral organogenesis, required to maintain the interlocking of the palea and lemma, and fertility. Triggers culm elongation. The sequence is that of Serine/threonine-protein kinase-like protein CR4 from Oryza sativa subsp. japonica (Rice).